The chain runs to 629 residues: MSAAETNQLQESMEKLNIGSTTEEQSAAAATTTADQSAEEQGESSGVAENSASLYVGELNPSVNEATLFEIFSPIGQVSSIRVCRDAVSKKSLGYAYVNYHKYEDGEKAIEELNYNPIEGRPCRIMWSQRDPSARRSGDGNIFIKNLHPAIDNKALHDTFSAFGKILSCKVATDEFGQSKCFGFVHYETAEAAEAAIENVNGMLLNDREVFVGKHISKKDRESKFEEMKANFTNIYVKNIDLNYSEESFEKLFSPFGKITSIYLEKDQDGKSKGFGFVNFEDHESAVKAVEELNDKEINGQKIYVGRAQKKRERLEELKKQYEAVRLEKLAKYQGVNLFVKNLDDTIDSEKLEEEFKPFGTITSAKVMVDEAGKSKGFGFVCFTTPEEATKAITEMNTRMINGKPLYVALAQRKDVRRSQLEQQIQARNQMRMQNAAAGGLPGQFIPPMFYGQQGFFPPNGRGNAPYPGPNPQMMMRGRGQPFPEQWPRPGPNGQPVPVYGIPPQFQQDFNGQNMRPQQQQQQQPRGGYYPNRNQTSKRDLAAIISSVPQDQQKRILGEELYPKIVATGKAQEPEAAGKITGMMLGLENQEILDLLDDDELFNNHFEDALTAFEEYKKSEAAGNAEEQA.

Residues 1–11 (MSAAETNQLQE) show a composition bias toward polar residues. Residues 1-48 (MSAAETNQLQESMEKLNIGSTTEEQSAAAATTTADQSAEEQGESSGVA) form a disordered region. Over residues 20-36 (STTEEQSAAAATTTADQ) the composition is skewed to low complexity. RRM domains are found at residues 52–130 (ASLY…WSQR), 140–217 (GNIF…KHIS), 233–310 (TNIY…RAQK), and 336–413 (VNLF…LAQR). Positions 503–534 (PPQFQQDFNGQNMRPQQQQQQQPRGGYYPNRN) are disordered. Residues 505 to 517 (QFQQDFNGQNMRP) are compositionally biased toward polar residues. Residues 537 to 618 (SKRDLAAIIS…ALTAFEEYKK (82 aa)) enclose the PABC domain.

Belongs to the polyadenylate-binding protein type-1 family.

The protein localises to the cytoplasm. The protein resides in the nucleus. In terms of biological role, binds the poly(A) tail of mRNA. Appears to be an important mediator of the multiple roles of the poly(A) tail in mRNA biogenesis, stability and translation. In the nucleus, involved in both mRNA cleavage and polyadenylation. Is also required for efficient mRNA export to the cytoplasm. Acts in concert with a poly(A)-specific nuclease (PAN) to affect poly(A) tail shortening, which may occur concomitantly with either nucleocytoplasmic mRNA transport or translational initiation. In the cytoplasm, stimulates translation initiation and regulates mRNA decay through translation termination-coupled poly(A) shortening, probably mediated by PAN. The polypeptide is Polyadenylate-binding protein, cytoplasmic and nuclear (PAB1) (Candida albicans (strain SC5314 / ATCC MYA-2876) (Yeast)).